The following is a 150-amino-acid chain: MTTEKKTMNISEIQELLPHRYPFLLIDRVIDFQEAKYLHAIKNVSVNEPQFTGHFPQLPVFPGVLILEAMAQATGLLAFKSFGAPTENELYYFASVDGAKFRKPVVPGDQMVIEVEFLKERRGIAAFSGVAKVDGEVVCSAELKCARREF.

The active site involves His54.

Belongs to the thioester dehydratase family. FabZ subfamily.

It is found in the cytoplasm. It carries out the reaction a (3R)-hydroxyacyl-[ACP] = a (2E)-enoyl-[ACP] + H2O. Functionally, involved in unsaturated fatty acids biosynthesis. Catalyzes the dehydration of short chain beta-hydroxyacyl-ACPs and long chain saturated and unsaturated beta-hydroxyacyl-ACPs. This chain is 3-hydroxyacyl-[acyl-carrier-protein] dehydratase FabZ, found in Vibrio parahaemolyticus serotype O3:K6 (strain RIMD 2210633).